The sequence spans 150 residues: UPF0735 ACT domain-containing protein Helmi_18680 (150 aa).

The region spanning 72-147 (SVSLLLEHHP…GVRSAQLVGS (76 aa)) is the ACT domain.

The protein belongs to the UPF0735 family.

In Heliobacterium modesticaldum (strain ATCC 51547 / Ice1), this protein is UPF0735 ACT domain-containing protein Helmi_18680.